The chain runs to 227 residues: Cytochrome c oxidase subunit 2 (227 aa).

Topologically, residues 1–14 are mitochondrial intermembrane; it reads MAYPFELGFQDATS. A helical transmembrane segment spans residues 15–45; the sequence is PIMEELLHFHDHTLMIVFLISSLVLYIISLM. Over 46–59 the chain is Mitochondrial matrix; that stretch reads LTTKLTHTSTMDAQ. Residues 60 to 87 traverse the membrane as a helical segment; it reads EVETIWTILPAIILILIALPSLRILYMM. Residues 88–227 are Mitochondrial intermembrane-facing; that stretch reads DEINDPSLTV…HFENWSSSML (140 aa). Residues His161, Cys196, Glu198, Cys200, His204, and Met207 each contribute to the Cu cation site. Residue Glu198 coordinates Mg(2+).

This sequence belongs to the cytochrome c oxidase subunit 2 family. As to quaternary structure, component of the cytochrome c oxidase (complex IV, CIV), a multisubunit enzyme composed of 14 subunits. The complex is composed of a catalytic core of 3 subunits MT-CO1, MT-CO2 and MT-CO3, encoded in the mitochondrial DNA, and 11 supernumerary subunits COX4I, COX5A, COX5B, COX6A, COX6B, COX6C, COX7A, COX7B, COX7C, COX8 and NDUFA4, which are encoded in the nuclear genome. The complex exists as a monomer or a dimer and forms supercomplexes (SCs) in the inner mitochondrial membrane with NADH-ubiquinone oxidoreductase (complex I, CI) and ubiquinol-cytochrome c oxidoreductase (cytochrome b-c1 complex, complex III, CIII), resulting in different assemblies (supercomplex SCI(1)III(2)IV(1) and megacomplex MCI(2)III(2)IV(2)). Found in a complex with TMEM177, COA6, COX18, COX20, SCO1 and SCO2. Interacts with TMEM177 in a COX20-dependent manner. Interacts with COX20. Interacts with COX16. Cu cation is required as a cofactor.

The protein localises to the mitochondrion inner membrane. It catalyses the reaction 4 Fe(II)-[cytochrome c] + O2 + 8 H(+)(in) = 4 Fe(III)-[cytochrome c] + 2 H2O + 4 H(+)(out). In terms of biological role, component of the cytochrome c oxidase, the last enzyme in the mitochondrial electron transport chain which drives oxidative phosphorylation. The respiratory chain contains 3 multisubunit complexes succinate dehydrogenase (complex II, CII), ubiquinol-cytochrome c oxidoreductase (cytochrome b-c1 complex, complex III, CIII) and cytochrome c oxidase (complex IV, CIV), that cooperate to transfer electrons derived from NADH and succinate to molecular oxygen, creating an electrochemical gradient over the inner membrane that drives transmembrane transport and the ATP synthase. Cytochrome c oxidase is the component of the respiratory chain that catalyzes the reduction of oxygen to water. Electrons originating from reduced cytochrome c in the intermembrane space (IMS) are transferred via the dinuclear copper A center (CU(A)) of subunit 2 and heme A of subunit 1 to the active site in subunit 1, a binuclear center (BNC) formed by heme A3 and copper B (CU(B)). The BNC reduces molecular oxygen to 2 water molecules using 4 electrons from cytochrome c in the IMS and 4 protons from the mitochondrial matrix. The chain is Cytochrome c oxidase subunit 2 (MT-CO2) from Tamias merriami (Merriam's chipmunk).